The following is a 122-amino-acid chain: Large ribosomal subunit protein uL14 (122 aa).

It belongs to the universal ribosomal protein uL14 family. In terms of assembly, part of the 50S ribosomal subunit. Forms a cluster with proteins L3 and L19. In the 70S ribosome, L14 and L19 interact and together make contacts with the 16S rRNA in bridges B5 and B8.

Binds to 23S rRNA. Forms part of two intersubunit bridges in the 70S ribosome. The polypeptide is Large ribosomal subunit protein uL14 (Protochlamydia amoebophila (strain UWE25)).